A 310-amino-acid polypeptide reads, in one-letter code: Deoxypodophyllotoxin synthase (310 aa).

The Fe2OG dioxygenase domain maps to 159–258; the sequence is STNYLLHFMR…RLSTSSFSFP (100 aa). Residues His-184, Asp-186, and His-239 each coordinate Fe cation. Residue Arg-249 participates in 2-oxoglutarate binding.

This sequence belongs to the iron/ascorbate-dependent oxidoreductase family. Fe(2+) is required as a cofactor. In terms of tissue distribution, mostly expressed in leaves and stems.

It carries out the reaction (-)-yatein + 2-oxoglutarate + O2 = (-)-deoxypodophyllotoxin + succinate + CO2 + H2O. It functions in the pathway aromatic compound metabolism; phenylpropanoid biosynthesis. Its function is as follows. 2-oxoglutarate-dependent dioxygenase involved in the biosynthesis of etoposide, a chemotherapeutic compound of the topoisomerase inhibitor family. Catalyzes the conversion of yatein to deoxypodophyllotoxin. Can also use, to some extent, demethylyatein as substrate. The polypeptide is Deoxypodophyllotoxin synthase (Sinopodophyllum hexandrum (Himalayan may apple)).